Reading from the N-terminus, the 249-residue chain is Expansin-A18 (249 aa).

A signal peptide spans 1-21; it reads MGNIVLQLLAILALCIAPARS. The Expansin-like EG45 domain occupies 41–154; that stretch reads GGACGYGNLY…QQVKCWRSGG (114 aa). N-linked (GlcNAc...) asparagine glycosylation is present at asparagine 116. An Expansin-like CBD domain is found at 164 to 243; sequence YFELVLVTNM…GWSFGQTFST (80 aa).

Belongs to the expansin family. Expansin A subfamily. In terms of tissue distribution, expressed in roots.

Its subcellular location is the secreted. The protein localises to the cell wall. It localises to the membrane. Functionally, may cause loosening and extension of plant cell walls by disrupting non-covalent bonding between cellulose microfibrils and matrix glucans. No enzymatic activity has been found. May be required for rapid internodal elongation in deepwater rice during submergence. This chain is Expansin-A18 (EXPA18), found in Oryza sativa subsp. japonica (Rice).